Here is a 261-residue protein sequence, read N- to C-terminus: UPF0246 protein Rmet_0978 (261 aa).

This sequence belongs to the UPF0246 family.

This is UPF0246 protein Rmet_0978 from Cupriavidus metallidurans (strain ATCC 43123 / DSM 2839 / NBRC 102507 / CH34) (Ralstonia metallidurans).